We begin with the raw amino-acid sequence, 102 residues long: Integration host factor subunit beta (102 aa).

Residues 54–102 (HHRPARMGRNPKTGEPVALPAKYVPHFKPGKELRERVNSSRHQAPLRSQ) form a disordered region. A compositionally biased stretch (basic and acidic residues) spans 82–91 (PGKELRERVN). Polar residues predominate over residues 93–102 (SRHQAPLRSQ).

Belongs to the bacterial histone-like protein family. As to quaternary structure, heterodimer of an alpha and a beta chain.

Functionally, this protein is one of the two subunits of integration host factor, a specific DNA-binding protein that functions in genetic recombination as well as in transcriptional and translational control. The protein is Integration host factor subunit beta of Halorhodospira halophila (strain DSM 244 / SL1) (Ectothiorhodospira halophila (strain DSM 244 / SL1)).